Here is a 28-residue protein sequence, read N- to C-terminus: uncharacterized protein (28 aa).

The helical transmembrane segment at 5 to 27 (SAFHACNIIFLPLVKCASATIML) threads the bilayer.

The protein localises to the membrane. This is an uncharacterized protein from Saccharomyces cerevisiae (strain ATCC 204508 / S288c) (Baker's yeast).